The primary structure comprises 349 residues: Succinylglutamate desuccinylase (349 aa).

Residues H70, E73, and H166 each coordinate Zn(2+). E229 is a catalytic residue.

Belongs to the AspA/AstE family. Succinylglutamate desuccinylase subfamily. Zn(2+) serves as cofactor.

The catalysed reaction is N-succinyl-L-glutamate + H2O = L-glutamate + succinate. It functions in the pathway amino-acid degradation; L-arginine degradation via AST pathway; L-glutamate and succinate from L-arginine: step 5/5. Its function is as follows. Transforms N(2)-succinylglutamate into succinate and glutamate. This is Succinylglutamate desuccinylase from Burkholderia pseudomallei (strain 1710b).